A 780-amino-acid polypeptide reads, in one-letter code: Protein SAV (780 aa).

Residues 253–260 (GPPGTGKT) and 528–535 (GPPGTGKT) each bind ATP.

It belongs to the AAA ATPase family. CDC48 subfamily.

Not yet known, shows ATPase activity. The chain is Protein SAV (sav) from Sulfolobus acidocaldarius (strain ATCC 33909 / DSM 639 / JCM 8929 / NBRC 15157 / NCIMB 11770).